The primary structure comprises 1852 residues: Chitin synthase csmA (1852 aa).

The tract at residues 1 to 20 is disordered; that stretch reads MVGTLPAGHTPSHVQSSLPS. Positions 1–787 constitute a Myosin motor domain; it reads MVGTLPAGHT…CWADLAKVGE (787 aa). Asn-58 carries an N-linked (GlcNAc...) asparagine glycan. ATP is bound at residue 102–109; it reads GESGAGKT. A disordered region spans residues 599–646; sequence SSKPLRMPSMARRKTSPASRLTFDATPAEDPYETESQTGSSAKNSSAK. The N-linked (GlcNAc...) asparagine glycan is linked to Asn-642. Residues 667–691 are actin-binding; it reads LDIVNKCLTSGNLNPYFVFCLKPND. Asn-840 carries an N-linked (GlcNAc...) asparagine glycan. A run of 2 helical transmembrane segments spans residues 895-915 and 930-950; these read WMAIVWLLTFYIPTPAIRYIG and FAINLLIWLACAIAVFIIVGF. Residues 958-1017 enclose the Cytochrome b5 heme-binding domain; that stretch reads QHVYSPAELSSHDGKDGHSSYTSIRGLVLDLGEFMDSHYPGIVPDSALKKYAGVDSTALF. Residues Asn-1044 and Asn-1195 are each glycosylated (N-linked (GlcNAc...) asparagine). Residues 1205-1225 traverse the membrane as a helical segment; that stretch reads FILAISVLICSVIVFKFFAAL. Residues Asn-1428, Asn-1462, and Asn-1568 are each glycosylated (N-linked (GlcNAc...) asparagine). The next 3 membrane-spanning stretches (helical) occupy residues 1600 to 1620, 1626 to 1646, and 1653 to 1673; these read ISTIIMPVTVAYIVYLIVWLV, IPWTSFLLLAAIYGLQAIIFI, and MIGWMIIYILAIPVYSLALPL. Positions 1794-1849 constitute a DEK-C domain; sequence LPSDDAILSEIRDILRTADLMTVTKKNIKQELERRFGVNLDAKRPYINSATEAVLS.

This sequence in the N-terminal section; belongs to the TRAFAC class myosin-kinesin ATPase superfamily. Myosin family. In the C-terminal section; belongs to the chitin synthase family. Class V subfamily. Binds F-actin via its N-terminal myosin motor-like domain (MMD). Interacts with kibesin kinA.

The protein resides in the cell membrane. It is found in the cell septum. It localises to the cell tip. It carries out the reaction [(1-&gt;4)-N-acetyl-beta-D-glucosaminyl](n) + UDP-N-acetyl-alpha-D-glucosamine = [(1-&gt;4)-N-acetyl-beta-D-glucosaminyl](n+1) + UDP + H(+). Its function is as follows. Polymerizes chitin, a structural polymer of the cell wall and septum, by transferring the sugar moiety of UDP-GlcNAc to the non-reducing end of the growing chitin polymer. Plays an important role in polarized hyphal cell wall synthesis and maintenance of cell wall integrity. Its role in growth and morphogenesis is particularly important under low osmotic conditions. The chain is Chitin synthase csmA from Emericella nidulans (Aspergillus nidulans).